A 1163-amino-acid chain; its full sequence is Ankyrin repeat-containing protein F37A4.4 (1163 aa).

One copy of the ANK repeat lies at 856-885 (YGNTALHVATRRGYQNLVEILIKHGADRSF). Residues 929–1025 (LCVPEKFPVS…KLIEKDCDYL (97 aa)) form the BRCT domain.

The polypeptide is Ankyrin repeat-containing protein F37A4.4 (Caenorhabditis elegans).